A 108-amino-acid polypeptide reads, in one-letter code: MGVTVENISAGDGKTFPQPGDNVTIHYVGTLLDGSKFDSSRDRGTPFVCRIGQGQVIRGWDEGVPQLSVGQKANLICTPDYAYGARGFPPVIPPNSTLKFEVELLKVN.

Residues 20–108 (GDNVTIHYVG…KFEVELLKVN (89 aa)) form the PPIase FKBP-type domain.

The protein belongs to the FKBP-type PPIase family. FKBP1 subfamily.

Its subcellular location is the cytoplasm. It carries out the reaction [protein]-peptidylproline (omega=180) = [protein]-peptidylproline (omega=0). Inhibited by both FK506 and rapamycin. PPIases accelerate the folding of proteins. It catalyzes the cis-trans isomerization of proline imidic peptide bonds in oligopeptides. This chain is FK506-binding protein 1 (FRR1), found in Cryptococcus neoformans var. grubii serotype A (strain H99 / ATCC 208821 / CBS 10515 / FGSC 9487) (Filobasidiella neoformans var. grubii).